A 99-amino-acid chain; its full sequence is Plastocyanin (99 aa).

A Plastocyanin-like domain is found at 1 to 99 (IEILLGGDDG…AGMVGKVTVN (99 aa)). Cu cation is bound by residues His37, Cys84, His87, and Met92.

It belongs to the plastocyanin family. Requires Cu(2+) as cofactor.

It is found in the plastid. The protein localises to the chloroplast thylakoid membrane. In terms of biological role, participates in electron transfer between P700 and the cytochrome b6-f complex in photosystem I. This Cucumis sativus (Cucumber) protein is Plastocyanin (PETE).